The following is a 186-amino-acid chain: Ribosome-recycling factor (186 aa).

It belongs to the RRF family.

The protein resides in the cytoplasm. In terms of biological role, responsible for the release of ribosomes from messenger RNA at the termination of protein biosynthesis. May increase the efficiency of translation by recycling ribosomes from one round of translation to another. The sequence is that of Ribosome-recycling factor from Nitratiruptor sp. (strain SB155-2).